The chain runs to 159 residues: Cytochrome b6-f complex subunit 4 (159 aa).

Transmembrane regions (helical) follow at residues 35–55 (ILIF…LAVL), 93–113 (LLGV…PFIE), and 127–147 (ATAV…GAMI).

It belongs to the cytochrome b family. PetD subfamily. The 4 large subunits of the cytochrome b6-f complex are cytochrome b6, subunit IV (17 kDa polypeptide, PetD), cytochrome f and the Rieske protein, while the 4 small subunits are PetG, PetL, PetM and PetN. The complex functions as a dimer.

The protein resides in the cell inner membrane. Component of the cytochrome b6-f complex, which mediates electron transfer between photosystem II (PSII) and photosystem I (PSI), cyclic electron flow around PSI, and state transitions. The protein is Cytochrome b6-f complex subunit 4 of Gloeobacter violaceus (strain ATCC 29082 / PCC 7421).